The following is a 159-amino-acid chain: Small ribosomal subunit protein uS5c (159 aa).

One can recognise an S5 DRBM domain in the interval 17 to 80; sequence WEERVVSVQR…TDGKKNVITV (64 aa).

Belongs to the universal ribosomal protein uS5 family. As to quaternary structure, part of the 30S ribosomal subunit. Contacts protein S4.

The protein localises to the plastid. It localises to the chloroplast. Its function is as follows. With S4 and S12 plays an important role in translational accuracy. This Emiliania huxleyi (Coccolithophore) protein is Small ribosomal subunit protein uS5c (rps5).